The following is a 419-amino-acid chain: D-amino acid dehydrogenase (419 aa).

3–17 (VLVLGAGVAGVSSVW) provides a ligand contact to FAD.

This sequence belongs to the DadA oxidoreductase family. Requires FAD as cofactor.

It catalyses the reaction a D-alpha-amino acid + A + H2O = a 2-oxocarboxylate + AH2 + NH4(+). It functions in the pathway amino-acid degradation; D-alanine degradation; NH(3) and pyruvate from D-alanine: step 1/1. Oxidative deamination of D-amino acids. The sequence is that of D-amino acid dehydrogenase from Neisseria gonorrhoeae (strain ATCC 700825 / FA 1090).